A 259-amino-acid chain; its full sequence is Probable transcriptional regulatory protein Noca_2383 (259 aa).

It belongs to the TACO1 family.

It localises to the cytoplasm. The sequence is that of Probable transcriptional regulatory protein Noca_2383 from Nocardioides sp. (strain ATCC BAA-499 / JS614).